A 199-amino-acid chain; its full sequence is Recombination protein RecR (199 aa).

The C4-type zinc-finger motif lies at 57-72; that stretch reads CSICFNLTDTDPCAIC. One can recognise a Toprim domain in the interval 80-175; it reads RLLMVVEEAK…KVTRIAHGLP (96 aa).

This sequence belongs to the RecR family.

Its function is as follows. May play a role in DNA repair. It seems to be involved in an RecBC-independent recombinational process of DNA repair. It may act with RecF and RecO. The polypeptide is Recombination protein RecR (Carboxydothermus hydrogenoformans (strain ATCC BAA-161 / DSM 6008 / Z-2901)).